We begin with the raw amino-acid sequence, 536 residues long: UDP-glucuronosyltransferase 2A2 (536 aa).

The Cytoplasmic portion of the chain corresponds to 1 to 15 (MVSIRDFTMPKKFVQ). Residues 16 to 36 (MLVFNLTLTEVVLSGNVLIWP) form a helical membrane-spanning segment. Residues 37–500 (TDGSHWLNIK…TWFQYHSLDV (464 aa)) lie on the Lumenal side of the membrane. Residues asparagine 58, asparagine 322, and asparagine 356 are each glycosylated (N-linked (GlcNAc...) asparagine). The chain crosses the membrane as a helical span at residues 501–521 (IGFLLVCVTTAIFLVIQCCLF). Over 522 to 536 (SCQKFGKIGKKKKRE) the chain is Cytoplasmic.

This sequence belongs to the UDP-glycosyltransferase family. In terms of tissue distribution, mainly expressed in the nasal mucosa.

The protein resides in the endoplasmic reticulum membrane. The catalysed reaction is glucuronate acceptor + UDP-alpha-D-glucuronate = acceptor beta-D-glucuronoside + UDP + H(+). The enzyme catalyses 17alpha-estradiol + UDP-alpha-D-glucuronate = 17alpha-estradiol 3-O-(beta-D-glucuronate) + UDP + H(+). It catalyses the reaction 17beta-estradiol + UDP-alpha-D-glucuronate = 17beta-estradiol 3-O-(beta-D-glucuronate) + UDP + H(+). It carries out the reaction chenodeoxycholate + UDP-alpha-D-glucuronate = chenodeoxycholoyl-24-O-(beta-D-glucuronate) + UDP. The catalysed reaction is lithocholate + UDP-alpha-D-glucuronate = lithocholoyl-24-O-(beta-D-glucuronate) + UDP. The enzyme catalyses deoxycholate + UDP-alpha-D-glucuronate = deoxycholoyl-24-O-(beta-D-glucuronate) + UDP. It catalyses the reaction hyocholate + UDP-alpha-D-glucuronate = hyocholoyl-24-O-(beta-D-glucuronate) + UDP. It carries out the reaction hyodeoxycholate + UDP-alpha-D-glucuronate = hyodeoxycholate 6-O-(beta-D-glucuronate) + UDP + H(+). In terms of biological role, UDP-glucuronosyltransferase (UGT) that catalyzes phase II biotransformation reactions in which lipophilic substrates are conjugated with glucuronic acid to increase the metabolite's water solubility, thereby facilitating excretion into either the urine or bile. Essential for the elimination and detoxification of drugs, xenobiotics and endogenous compounds. Catalyzes the glucuronidation of endogenous estrogen hormone estradiol. Contributes to bile acid (BA) detoxification by catalyzing the glucuronidation of BA substrates, which are natural detergents for dietary lipids absorption. Shows a potential role in detoxification of toxic waste compounds in the amniotic fluid before birth, and air-born chemical after birth. In Homo sapiens (Human), this protein is UDP-glucuronosyltransferase 2A2.